The primary structure comprises 310 residues: Ribosomal RNA small subunit methyltransferase H (310 aa).

Residues 32–34, D52, F79, D100, and Q107 contribute to the S-adenosyl-L-methionine site; that span reads GGH.

It belongs to the methyltransferase superfamily. RsmH family.

Its subcellular location is the cytoplasm. It catalyses the reaction cytidine(1402) in 16S rRNA + S-adenosyl-L-methionine = N(4)-methylcytidine(1402) in 16S rRNA + S-adenosyl-L-homocysteine + H(+). Functionally, specifically methylates the N4 position of cytidine in position 1402 (C1402) of 16S rRNA. The polypeptide is Ribosomal RNA small subunit methyltransferase H (Bacillus cereus (strain G9842)).